The sequence spans 430 residues: Enolase (430 aa).

Gln-163 is a binding site for (2R)-2-phosphoglycerate. The Proton donor role is filled by Glu-205. 3 residues coordinate Mg(2+): Asp-242, Glu-287, and Asp-314. Positions 339, 368, 369, and 390 each coordinate (2R)-2-phosphoglycerate. Residue Lys-339 is the Proton acceptor of the active site.

Belongs to the enolase family. Requires Mg(2+) as cofactor.

The protein localises to the cytoplasm. It is found in the secreted. The protein resides in the cell surface. It catalyses the reaction (2R)-2-phosphoglycerate = phosphoenolpyruvate + H2O. It functions in the pathway carbohydrate degradation; glycolysis; pyruvate from D-glyceraldehyde 3-phosphate: step 4/5. Its function is as follows. Catalyzes the reversible conversion of 2-phosphoglycerate (2-PG) into phosphoenolpyruvate (PEP). It is essential for the degradation of carbohydrates via glycolysis. The sequence is that of Enolase from Bacillus velezensis (strain DSM 23117 / BGSC 10A6 / LMG 26770 / FZB42) (Bacillus amyloliquefaciens subsp. plantarum).